The primary structure comprises 214 residues: Pyridoxine/pyridoxamine 5'-phosphate oxidase (214 aa).

Substrate is bound by residues 9-12 (RREY) and Lys67. Residues 62–67 (RTVLLK), 77–78 (YS), Arg83, Lys84, and Gln106 contribute to the FMN site. Substrate is bound by residues Tyr124, Arg128, and Ser132. FMN contacts are provided by residues 141-142 (QS) and Trp186. 192 to 194 (RLH) provides a ligand contact to substrate. FMN is bound at residue Arg196.

It belongs to the pyridoxamine 5'-phosphate oxidase family. As to quaternary structure, homodimer. It depends on FMN as a cofactor.

It carries out the reaction pyridoxamine 5'-phosphate + O2 + H2O = pyridoxal 5'-phosphate + H2O2 + NH4(+). It catalyses the reaction pyridoxine 5'-phosphate + O2 = pyridoxal 5'-phosphate + H2O2. The protein operates within cofactor metabolism; pyridoxal 5'-phosphate salvage; pyridoxal 5'-phosphate from pyridoxamine 5'-phosphate: step 1/1. It functions in the pathway cofactor metabolism; pyridoxal 5'-phosphate salvage; pyridoxal 5'-phosphate from pyridoxine 5'-phosphate: step 1/1. In terms of biological role, catalyzes the oxidation of either pyridoxine 5'-phosphate (PNP) or pyridoxamine 5'-phosphate (PMP) into pyridoxal 5'-phosphate (PLP). In Porphyromonas gingivalis (strain ATCC 33277 / DSM 20709 / CIP 103683 / JCM 12257 / NCTC 11834 / 2561), this protein is Pyridoxine/pyridoxamine 5'-phosphate oxidase.